A 379-amino-acid chain; its full sequence is uncharacterized protein (379 aa).

3 disordered regions span residues 1–20, 227–290, and 331–371; these read MLPQ…PVGP, VSQR…LQGH, and PGCA…RAGH. Residues 7-20 are compositionally biased toward low complexity; it reads QVVHGVQDGPPVGP. Residues 249 to 261 are compositionally biased toward basic and acidic residues; that stretch reads GCKDPRVRKEPGR.

This is an uncharacterized protein from Dryophytes versicolor (chameleon treefrog).